Reading from the N-terminus, the 248-residue chain is PF03932 family protein CutC (248 aa).

Belongs to the CutC family. In terms of assembly, homodimer.

Its subcellular location is the cytoplasm. This Salmonella paratyphi B (strain ATCC BAA-1250 / SPB7) protein is PF03932 family protein CutC.